Here is a 128-residue protein sequence, read N- to C-terminus: Aspartate 1-decarboxylase (128 aa).

The active-site Schiff-base intermediate with substrate; via pyruvic acid is Ser25. Ser25 is modified (pyruvic acid (Ser)). Position 57 (Thr57) interacts with substrate. Tyr58 (proton donor) is an active-site residue. Residue 73–75 coordinates substrate; that stretch reads GAA.

The protein belongs to the PanD family. Heterooctamer of four alpha and four beta subunits. The cofactor is pyruvate. Post-translationally, is synthesized initially as an inactive proenzyme, which is activated by self-cleavage at a specific serine bond to produce a beta-subunit with a hydroxyl group at its C-terminus and an alpha-subunit with a pyruvoyl group at its N-terminus.

It localises to the cytoplasm. It carries out the reaction L-aspartate + H(+) = beta-alanine + CO2. It functions in the pathway cofactor biosynthesis; (R)-pantothenate biosynthesis; beta-alanine from L-aspartate: step 1/1. Its function is as follows. Catalyzes the pyruvoyl-dependent decarboxylation of aspartate to produce beta-alanine. The chain is Aspartate 1-decarboxylase from Caldicellulosiruptor saccharolyticus (strain ATCC 43494 / DSM 8903 / Tp8T 6331).